The chain runs to 195 residues: Exosome complex component CSL4 (195 aa).

Serine 21 carries the post-translational modification Phosphoserine. In terms of domain architecture, S1 motif spans 66-147 (DVGAVVTCKV…AQSNYLLTTA (82 aa)).

It belongs to the CSL4 family. As to quaternary structure, component of the RNA exosome core complex (Exo-9), composed of EXOSC1, EXOSC2, EXOSC3, EXOSC4, EXOSC5, EXOSC6, EXOSC7, EXOSC8 and EXOSC9; within the complex interacts with EXOSC6. The catalytically inactive RNA exosome core complex (Exo-9) associates with the catalytic subunit EXOSC10/RRP6. Exo-9 may associate with DIS3 to form the nucleolar exosome complex, or DIS3L to form the cytoplasmic exosome complex. Exo-9 is formed by a hexameric base ring consisting of the heterodimers EXOSC4-EXOSC9, EXOSC5-EXOSC8 and EXOSC6-EXOSC7, and a cap ring consisting of EXOSC1, EXOSC2 and EXOSC3. The RNA exosome complex associates with cofactors C1D/RRP47, MPHOSPH6/MPP6 and MTREX/MTR4. Interacts with DDX60.

It is found in the nucleus. The protein localises to the nucleolus. It localises to the cytoplasm. Non-catalytic component of the RNA exosome complex which has 3'-&gt;5' exoribonuclease activity and participates in a multitude of cellular RNA processing and degradation events. In the nucleus, the RNA exosome complex is involved in proper maturation of stable RNA species such as rRNA, snRNA and snoRNA, in the elimination of RNA processing by-products and non-coding 'pervasive' transcripts, such as antisense RNA species and promoter-upstream transcripts (PROMPTs), and of mRNAs with processing defects, thereby limiting or excluding their export to the cytoplasm. The RNA exosome may be involved in Ig class switch recombination (CSR) and/or Ig variable region somatic hypermutation (SHM) by targeting AICDA deamination activity to transcribed dsDNA substrates. In the cytoplasm, the RNA exosome complex is involved in general mRNA turnover and specifically degrades inherently unstable mRNAs containing AU-rich elements (AREs) within their 3' untranslated regions, and in RNA surveillance pathways, preventing translation of aberrant mRNAs. It seems to be involved in degradation of histone mRNA. The catalytic inactive RNA exosome core complex of 9 subunits (Exo-9) is proposed to play a pivotal role in the binding and presentation of RNA for ribonucleolysis, and to serve as a scaffold for the association with catalytic subunits and accessory proteins or complexes. EXOSC1 as peripheral part of the Exo-9 complex stabilizes the hexameric ring of RNase PH-domain subunits through contacts with EXOSC6 and EXOSC8. In Mus musculus (Mouse), this protein is Exosome complex component CSL4 (Exosc1).